The chain runs to 192 residues: Cytidylate kinase (192 aa).

ATP is bound at residue 7–15 (GPAGSGKST).

The protein belongs to the cytidylate kinase family. Type 2 subfamily.

Its subcellular location is the cytoplasm. The catalysed reaction is CMP + ATP = CDP + ADP. It catalyses the reaction dCMP + ATP = dCDP + ADP. In Haloarcula marismortui (strain ATCC 43049 / DSM 3752 / JCM 8966 / VKM B-1809) (Halobacterium marismortui), this protein is Cytidylate kinase.